A 344-amino-acid polypeptide reads, in one-letter code: Meiotic recombination protein DMC1 homolog A (344 aa).

Residue 133–140 (GEFRSGKT) coordinates ATP. A dsDNA-binding site is contributed by Arg235. SsDNA contacts are provided by Arg235, Phe238, Arg241, Arg247, and Arg315. DsDNA-binding residues include Arg241 and Arg247.

This sequence belongs to the RecA family. DMC1 subfamily. In terms of tissue distribution, expressed in pollen mother cells and root tips.

The protein localises to the nucleus. Functionally, recombinase that may participate in meiotic recombination, specifically in homologous strand assimilation, which is required for the resolution of meiotic double-strand breaks. Exhibits DNA-dependent ATPase activity when bound to single-stranded DNA (ssDNA). Mediates renaturation of homologous complementary strands as well as assimilation of single strands into homologous supercoiled duplexes leading to D-loop formation. Binds circular single-stranded DNA (ssDNA) and circular double-stranded DNA (dsDNA) in vitro. Catalyzes DNA homologous renaturation and DNA strand exchange. The rates of these activities are dependent on the state of ATP hydrolysis. Forms helical filaments along ssDNA and dsDNA, and promotes strand exchange between ssDNA and dsDNA with long DNA substrates of several thousand base pairs. The presence of the replication protein A is not required for this activity. Seems to be required for homologous pairing and subsequent chromosome segregation during male meiosis. May be not directly required for homologous pairing during male meiosis. Required for synaptonemal complex assembly and crossover formation. Functions redundantly with DMC1B. This chain is Meiotic recombination protein DMC1 homolog A, found in Oryza sativa subsp. indica (Rice).